The following is a 983-amino-acid chain: ABC transporter A family member 2 (983 aa).

A run of 6 helical transmembrane segments spans residues 33-53 (FLQL…QAAM), 221-241 (IVAL…FGFV), 279-299 (ILTA…QFDF), 305-325 (FPVV…LAFM), 339-359 (VGFF…SGFP), and 416-436 (VLTI…WFVL). In terms of domain architecture, ABC transporter spans 518-763 (VQIRGLAKTY…FGTGFIANIS (246 aa)). An ATP-binding site is contributed by 564–571 (GPNGAGKT). Positions 963-983 (RSGSTSSRRFSRSGSSRRFSS) are disordered.

It belongs to the ABC transporter superfamily. ABCA family. CPR flippase (TC 3.A.1.211) subfamily.

It localises to the membrane. The polypeptide is ABC transporter A family member 2 (ABCA2) (Arabidopsis thaliana (Mouse-ear cress)).